A 445-amino-acid chain; its full sequence is Phosphoglucosamine mutase (445 aa).

Residue Ser102 is the Phosphoserine intermediate of the active site. 4 residues coordinate Mg(2+): Ser102, Asp241, Asp243, and Asp245. Ser102 bears the Phosphoserine mark.

It belongs to the phosphohexose mutase family. Mg(2+) is required as a cofactor. In terms of processing, activated by phosphorylation.

It carries out the reaction alpha-D-glucosamine 1-phosphate = D-glucosamine 6-phosphate. In terms of biological role, catalyzes the conversion of glucosamine-6-phosphate to glucosamine-1-phosphate. This is Phosphoglucosamine mutase from Escherichia fergusonii (strain ATCC 35469 / DSM 13698 / CCUG 18766 / IAM 14443 / JCM 21226 / LMG 7866 / NBRC 102419 / NCTC 12128 / CDC 0568-73).